A 217-amino-acid polypeptide reads, in one-letter code: Small ribosomal subunit protein uS3c (217 aa).

The 73-residue stretch at 47-119 folds into the KH type-2 domain; that stretch reads VRTHIKSSSN…KLHIAIEKVA (73 aa).

It belongs to the universal ribosomal protein uS3 family. In terms of assembly, part of the 30S ribosomal subunit.

The protein localises to the plastid. It localises to the chloroplast. The chain is Small ribosomal subunit protein uS3c (rps3) from Pinus thunbergii (Japanese black pine).